The primary structure comprises 592 residues: Putative D-/L-hydantoinase subunit B (592 aa).

The protein belongs to the HyuB family. In terms of assembly, may form a complex with HyuA.

Its function is as follows. Involved in the asymmetric conversion of racemic 5-substituted hydantoins to the corresponding L-amino acids. HyuA and HyuB are both required for the conversion of D- and L-5-substituted hydantoins to corresponding N-carbamoyl-D- and N-carbamoyl-L-amino acids, respectively. This is Putative D-/L-hydantoinase subunit B from Pseudomonas sp. (strain NS671).